A 345-amino-acid chain; its full sequence is NADH-quinone oxidoreductase subunit H 1 (345 aa).

9 consecutive transmembrane segments (helical) span residues Ile-11–Leu-31, Pro-50–Phe-70, Phe-84–Phe-104, Val-115–Gly-135, Leu-161–Val-181, Ala-187–Ile-207, Tyr-248–Ser-268, Val-277–Ile-297, and Ile-309–Ala-329.

This sequence belongs to the complex I subunit 1 family. As to quaternary structure, NDH-1 is composed of 14 different subunits. Subunits NuoA, H, J, K, L, M, N constitute the membrane sector of the complex.

The protein localises to the cell inner membrane. It carries out the reaction a quinone + NADH + 5 H(+)(in) = a quinol + NAD(+) + 4 H(+)(out). Its function is as follows. NDH-1 shuttles electrons from NADH, via FMN and iron-sulfur (Fe-S) centers, to quinones in the respiratory chain. The immediate electron acceptor for the enzyme in this species is believed to be ubiquinone. Couples the redox reaction to proton translocation (for every two electrons transferred, four hydrogen ions are translocated across the cytoplasmic membrane), and thus conserves the redox energy in a proton gradient. This subunit may bind ubiquinone. In Cereibacter sphaeroides (strain ATCC 17023 / DSM 158 / JCM 6121 / CCUG 31486 / LMG 2827 / NBRC 12203 / NCIMB 8253 / ATH 2.4.1.) (Rhodobacter sphaeroides), this protein is NADH-quinone oxidoreductase subunit H 1.